Reading from the N-terminus, the 220-residue chain is Glutamine amidotransferase-like class 1 domain-containing protein 1 (220 aa).

An N-terminal signal peptide occupies residues 1 to 38; that stretch reads MASERLPNRPACLLVASGAAEGVSAQSFLHCFTMASTA. An N-linked (GlcNAc...) asparagine glycan is attached at N201.

It belongs to the peptidase C56 family. Homotetramer. Component of the FERRY complex composed of five subunits, TBCK, PPP1R21, FERRY3, CRYZL1 and GATD1 with a ratio of 1:2:1:2:4, respectively.

The protein resides in the secreted. It localises to the early endosome. Component of the FERRY complex (Five-subunit Endosomal Rab5 and RNA/ribosome intermediary). The FERRY complex directly interacts with mRNAs and RAB5A, and functions as a RAB5A effector involved in the localization and the distribution of specific mRNAs most likely by mediating their endosomal transport. The complex recruits mRNAs and ribosomes to early endosomes through direct mRNA-interaction. In Homo sapiens (Human), this protein is Glutamine amidotransferase-like class 1 domain-containing protein 1.